A 397-amino-acid chain; its full sequence is Acetyl-CoA acetyltransferase, cytosolic (397 aa).

Met-1 carries the N-acetylmethionine modification. Catalysis depends on Cys-92, which acts as the Acyl-thioester intermediate. Lys-200 bears the N6-acetyllysine mark. The CoA site is built by Arg-223 and Ser-226. An N6-acetyllysine mark is found at Lys-233 and Lys-235. Ser-252 is a CoA binding site. The active-site Proton donor/acceptor is Cys-383.

The protein belongs to the thiolase-like superfamily. Thiolase family. As to quaternary structure, homotetramer.

It localises to the cytoplasm. Its subcellular location is the cytosol. It catalyses the reaction 2 acetyl-CoA = acetoacetyl-CoA + CoA. The protein operates within lipid metabolism; fatty acid metabolism. Its function is as follows. Involved in the biosynthetic pathway of cholesterol. The chain is Acetyl-CoA acetyltransferase, cytosolic (Acat2) from Rattus norvegicus (Rat).